Here is a 360-residue protein sequence, read N- to C-terminus: S-adenosylmethionine:tRNA ribosyltransferase-isomerase (360 aa).

It belongs to the QueA family. Monomer.

The protein localises to the cytoplasm. The catalysed reaction is 7-aminomethyl-7-carbaguanosine(34) in tRNA + S-adenosyl-L-methionine = epoxyqueuosine(34) in tRNA + adenine + L-methionine + 2 H(+). It participates in tRNA modification; tRNA-queuosine biosynthesis. Functionally, transfers and isomerizes the ribose moiety from AdoMet to the 7-aminomethyl group of 7-deazaguanine (preQ1-tRNA) to give epoxyqueuosine (oQ-tRNA). This chain is S-adenosylmethionine:tRNA ribosyltransferase-isomerase, found in Burkholderia pseudomallei (strain 1106a).